A 235-amino-acid chain; its full sequence is Probable queuosine precursor transporter (235 aa).

Transmembrane regions (helical) follow at residues 17-37, 56-76, 87-107, 127-147, 155-175, and 201-221; these read IIWL…FVQI, FHST…DLTV, IIFV…VLFS, IAIA…IVFN, WWVA…FVFF, and FKLF…LNVI.

This sequence belongs to the vitamin uptake transporter (VUT/ECF) (TC 2.A.88) family. Q precursor transporter subfamily.

It localises to the cell inner membrane. Functionally, involved in the import of queuosine (Q) precursors, required for Q precursor salvage. The polypeptide is Probable queuosine precursor transporter (Haemophilus influenzae (strain ATCC 51907 / DSM 11121 / KW20 / Rd)).